A 210-amino-acid chain; its full sequence is Glutathione S-transferase P 2 (210 aa).

Positions 2 to 81 constitute a GST N-terminal domain; the sequence is PPYTIVYFPS…HLGRSLGLYG (80 aa). Glutathione is bound by residues tyrosine 8, arginine 14, tryptophan 39, lysine 45, 52 to 53, and 65 to 66; these read QL and QS. The region spanning 83–204 is the GST C-terminal domain; that stretch reads NQREAAQVDM…SSPEHVNRPI (122 aa).

The protein belongs to the GST superfamily. Pi family. In terms of assembly, homodimer. Selectively expressed in gall bladder, colon, heart, and skeletal muscle.

It carries out the reaction RX + glutathione = an S-substituted glutathione + a halide anion + H(+). Conjugation of reduced glutathione to a wide number of exogenous and endogenous hydrophobic electrophiles. Cannot metabolize 1-chloro-2,4-dinitrobenzene. The chain is Glutathione S-transferase P 2 (Gstp2) from Mus musculus (Mouse).